We begin with the raw amino-acid sequence, 341 residues long: Glucokinase (341 aa).

18 to 23 (GDIGGT) contributes to the ATP binding site.

The protein belongs to the bacterial glucokinase family.

The protein localises to the cytoplasm. The catalysed reaction is D-glucose + ATP = D-glucose 6-phosphate + ADP + H(+). This Rhizobium etli (strain ATCC 51251 / DSM 11541 / JCM 21823 / NBRC 15573 / CFN 42) protein is Glucokinase.